Consider the following 171-residue polypeptide: Protein-export protein SecB (171 aa).

Belongs to the SecB family. Homotetramer, a dimer of dimers. One homotetramer interacts with 1 SecA dimer.

It is found in the cytoplasm. Functionally, one of the proteins required for the normal export of preproteins out of the cell cytoplasm. It is a molecular chaperone that binds to a subset of precursor proteins, maintaining them in a translocation-competent state. It also specifically binds to its receptor SecA. This is Protein-export protein SecB from Histophilus somni (strain 2336) (Haemophilus somnus).